We begin with the raw amino-acid sequence, 359 residues long: 3-dehydroquinate synthase (359 aa).

NAD(+)-binding positions include 72-77, 106-110, 130-131, Lys143, Lys152, and 170-173; these read EGEIHK, GVIGD, TS, and CLKT. Residues Glu185, His248, and His264 each contribute to the Zn(2+) site.

This sequence belongs to the sugar phosphate cyclases superfamily. Dehydroquinate synthase family. It depends on Co(2+) as a cofactor. The cofactor is Zn(2+). NAD(+) serves as cofactor.

The protein localises to the cytoplasm. The enzyme catalyses 7-phospho-2-dehydro-3-deoxy-D-arabino-heptonate = 3-dehydroquinate + phosphate. Its pathway is metabolic intermediate biosynthesis; chorismate biosynthesis; chorismate from D-erythrose 4-phosphate and phosphoenolpyruvate: step 2/7. Its function is as follows. Catalyzes the conversion of 3-deoxy-D-arabino-heptulosonate 7-phosphate (DAHP) to dehydroquinate (DHQ). This chain is 3-dehydroquinate synthase, found in Dehalococcoides mccartyi (strain ATCC BAA-2266 / KCTC 15142 / 195) (Dehalococcoides ethenogenes (strain 195)).